We begin with the raw amino-acid sequence, 345 residues long: NADH-ubiquinone oxidoreductase chain 2 (345 aa).

The next 10 membrane-spanning stretches (helical) occupy residues 1–21, 25–45, 59–79, 96–116, 123–143, 148–168, 191–211, 240–260, 274–294, and 324–344; these read MNPIINLILLSSMIAGTILTM, HWVSAWLGLELNTLAIIPIIS, YFLIQAASSALFLLSGITNAY, IMLSVALATKLGLAPIHFWLP, PMITALIITTWQKIAPMALLI, LIPPTITLIMGLLSTIIGGLG, ITITTITPSLALFNLTLYILL, TASLFLLSLLSLGGLPPLSGF, HLTPLALLMAITALLSLMFYL, and SLLSSLILLSLFLLPITPLMI.

The protein belongs to the complex I subunit 2 family.

The protein localises to the mitochondrion inner membrane. It catalyses the reaction a ubiquinone + NADH + 5 H(+)(in) = a ubiquinol + NAD(+) + 4 H(+)(out). Its function is as follows. Core subunit of the mitochondrial membrane respiratory chain NADH dehydrogenase (Complex I) that is believed to belong to the minimal assembly required for catalysis. Complex I functions in the transfer of electrons from NADH to the respiratory chain. The immediate electron acceptor for the enzyme is believed to be ubiquinone. The sequence is that of NADH-ubiquinone oxidoreductase chain 2 (MT-ND2) from Varanus timorensis (Timor monitor).